A 31-amino-acid chain; its full sequence is Cytochrome b6-f complex subunit 6 (31 aa).

A helical transmembrane segment spans residues 4–24; the sequence is LTSYFGFLLAALTITPALFIG.

This sequence belongs to the PetL family. As to quaternary structure, the 4 large subunits of the cytochrome b6-f complex are cytochrome b6, subunit IV (17 kDa polypeptide, PetD), cytochrome f and the Rieske protein, while the 4 small subunits are PetG, PetL, PetM and PetN. The complex functions as a dimer.

The protein resides in the plastid. It is found in the chloroplast thylakoid membrane. In terms of biological role, component of the cytochrome b6-f complex, which mediates electron transfer between photosystem II (PSII) and photosystem I (PSI), cyclic electron flow around PSI, and state transitions. PetL is important for photoautotrophic growth as well as for electron transfer efficiency and stability of the cytochrome b6-f complex. The sequence is that of Cytochrome b6-f complex subunit 6 from Agrostis stolonifera (Creeping bentgrass).